The following is a 505-amino-acid chain: Cholesteryl ester transfer protein (505 aa).

Positions 1 to 24 (MLWAGGMRLGMARILLMLVHAAAA) are cleaved as a signal peptide. Asn-68 and Asn-114 each carry an N-linked (GlcNAc...) asparagine glycan. Cys-169 and Cys-210 are oxidised to a cystine. Residues Asn-266, Asn-344, and Asn-422 are each glycosylated (N-linked (GlcNAc...) asparagine).

Belongs to the BPI/LBP/Plunc superfamily. BPI/LBP family. Highly expressed in liver brain, heart, and spleen. Secreted in plasma.

It is found in the secreted. It carries out the reaction cholesteryl (9Z-octadecenoate)(in) = cholesteryl (9Z-octadecenoate)(out). The enzyme catalyses 1,2,3-tri-(9Z-octadecenoyl)-glycerol(in) = 1,2,3-tri-(9Z-octadecenoyl)-glycerol(out). It catalyses the reaction cholesteryl (9Z,12Z)-octadecadienoate(in) = cholesteryl (9Z,12Z)-octadecadienoate(out). In terms of biological role, involved in the transfer of neutral lipids, including cholesteryl ester and triglyceride, among lipoprotein particles. Allows the net movement of cholesteryl ester from high density lipoproteins/HDL to triglyceride-rich very low density lipoproteins/VLDL, and the equimolar transport of triglyceride from VLDL to HDL. Regulates the reverse cholesterol transport, by which excess cholesterol is removed from peripheral tissues and returned to the liver for elimination. The polypeptide is Cholesteryl ester transfer protein (Gallus gallus (Chicken)).